Consider the following 911-residue polypeptide: FIGNL1-interacting regulator of recombination and mitosis (911 aa).

The interval serine 830–threonine 853 is disordered. The segment covering proline 844–threonine 853 has biased composition (basic and acidic residues).

Its subcellular location is the chromosome. It localises to the centromere. It is found in the kinetochore. The protein localises to the nucleus. The protein resides in the midbody. Its subcellular location is the cytoplasm. It localises to the cytoskeleton. It is found in the spindle. May play a role in chromosome segregation. In Danio rerio (Zebrafish), this protein is FIGNL1-interacting regulator of recombination and mitosis.